The primary structure comprises 136 residues: Histone H3 (136 aa).

The tract at residues 1–43 (MARTKQTARKSTGGKAPRKQLATKAARKSAPATGGVKKPHRYR) is disordered. Position 5 is an N6-methylated lysine (K5). K10 bears the N6-acetyllysine; alternate mark. Position 10 is an N6-methylated lysine; alternate (K10). Residue S11 is modified to Phosphoserine. Residues K15 and K24 each carry the N6-acetyllysine modification. Residues K28, K37, and K80 each carry the N6-methylated lysine modification.

The protein belongs to the histone H3 family. The nucleosome is a histone octamer containing two molecules each of H2A, H2B, H3 and H4 assembled in one H3-H4 heterotetramer and two H2A-H2B heterodimers. The octamer wraps approximately 147 bp of DNA. In terms of processing, acetylation is generally linked to gene activation. Methylation at Lys-5 is linked to gene activation. Methylation at Lys-10 is linked to gene repression.

The protein localises to the nucleus. It is found in the chromosome. Core component of nucleosome. Nucleosomes wrap and compact DNA into chromatin, limiting DNA accessibility to the cellular machineries which require DNA as a template. Histones thereby play a central role in transcription regulation, DNA repair, DNA replication and chromosomal stability. DNA accessibility is regulated via a complex set of post-translational modifications of histones, also called histone code, and nucleosome remodeling. This chain is Histone H3, found in Platynereis dumerilii (Dumeril's clam worm).